A 514-amino-acid chain; its full sequence is Serine--tRNA ligase, cytoplasmic (514 aa).

Met1 carries the post-translational modification N-acetylmethionine. Residues 9–61 are interaction with tRNA; it reads RVDKGGDPALIRESQEKRFKDPGLVDQLVKADSEWRRCRFRADNLNKLKNLCS. Ser241 is modified (phosphoserine). Positions 271 and 302 each coordinate L-serine. ATP-binding positions include 302–304 and 318–321; these read RQE and VHQF. Lys323 is subject to N6-acetyllysine. Residue Glu325 coordinates L-serine. 391 to 394 serves as a coordination point for ATP; that stretch reads ELVS. Asn427 provides a ligand contact to L-serine. The tract at residues 475–514 is disordered; the sequence is PIDQEPSKKQKKQHEGSKKKGAARDVALESQLQNMEVTDA. Residues 479–501 show a composition bias toward basic and acidic residues; the sequence is EPSKKQKKQHEGSKKKGAARDVA. Residues 482-494 carry the Nuclear localization signal motif; that stretch reads KKQKKQHEGSKKK. Over residues 504–514 the composition is skewed to polar residues; that stretch reads SQLQNMEVTDA.

This sequence belongs to the class-II aminoacyl-tRNA synthetase family. Type-1 seryl-tRNA synthetase subfamily. Homodimer. The tRNA molecule may bind across the dimer. Interacts with SIRT2. Interacts with METTL6; interaction is required for the tRNA N(3)-methylcytidine methyltransferase activity of METTL6.

It is found in the cytoplasm. The protein resides in the nucleus. It carries out the reaction tRNA(Ser) + L-serine + ATP = L-seryl-tRNA(Ser) + AMP + diphosphate + H(+). It catalyses the reaction tRNA(Sec) + L-serine + ATP = L-seryl-tRNA(Sec) + AMP + diphosphate + H(+). It participates in aminoacyl-tRNA biosynthesis; selenocysteinyl-tRNA(Sec) biosynthesis; L-seryl-tRNA(Sec) from L-serine and tRNA(Sec): step 1/1. Its function is as follows. Catalyzes the attachment of serine to tRNA(Ser) in a two-step reaction: serine is first activated by ATP to form Ser-AMP and then transferred to the acceptor end of tRNA(Ser). Is probably also able to aminoacylate tRNA(Sec) with serine, to form the misacylated tRNA L-seryl-tRNA(Sec), which will be further converted into selenocysteinyl-tRNA(Sec). In the nucleus, binds to the VEGFA core promoter and prevents MYC binding and transcriptional activation by MYC. Recruits SIRT2 to the VEGFA promoter, promoting deacetylation of histone H4 at 'Lys-16' (H4K16). Thereby, inhibits the production of VEGFA and sprouting angiogenesis mediated by VEGFA. The sequence is that of Serine--tRNA ligase, cytoplasmic (SARS1) from Bos taurus (Bovine).